A 450-amino-acid polypeptide reads, in one-letter code: Runt-related transcription factor 1 (450 aa).

The tract at residues 1–25 (MRIPVDASTSRRFTPPSTALSPGKM) is disordered. Residues 7–20 (ASTSRRFTPPSTAL) show a composition bias toward polar residues. T14 carries the phosphothreonine modification. A Phosphoserine modification is found at S21. 2 positions are modified to N6-acetyllysine: K24 and K43. Residues 50–178 (SMVEVLADHP…TVDGPREPRR (129 aa)) enclose the Runt domain. Positions 80 to 84 (RCNKT) are interaction with DNA. Chloride is bound by residues N112, E116, R139, and V170. 2 interaction with DNA regions span residues 135–143 (RFVGRSGRG) and 168–177 (ITVDGPREPR). Disordered stretches follow at residues 170-195 (VDGP…LSFS) and 209-252 (MRVS…SPPW). Phosphoserine is present on residues S193 and S212. The span at 222 to 247 (PRASLNHSTAFNPQPQSQMQDARQIQ) shows a compositional bias: polar residues. S249 is subject to Phosphoserine; by HIPK2. 2 positions are modified to phosphoserine: S266 and S267. At T272 the chain carries Phosphothreonine; by HIPK2. S275 carries the post-translational modification Phosphoserine; by HIPK2. The interaction with KAT6A stretch occupies residues 290 to 369 (SSRLSTAPDL…SQAQAGPFQT (80 aa)). T295 is modified (phosphothreonine). The segment at 306 to 398 (RQFPTLPSIS…MVGGERSPPR (93 aa)) is interaction with KAT6B. An interaction with FOXP3 region spans residues 360–400 (SQAQAGPFQTGSPSYHLYYGTSAGSYQFSMVGGERSPPRIL). Positions 410-450 (AALLNPSLPSQSDVVETEGSHSNSPTNMPPARLEEAVWRPY) are disordered. Over residues 416 to 435 (SLPSQSDVVETEGSHSNSPT) the composition is skewed to polar residues. S433 is modified (phosphoserine). Positions 441–450 (RLEEAVWRPY) are enriched in basic and acidic residues.

As to quaternary structure, heterodimer with CBFB. RUNX1 binds DNA as a monomer and through the Runt domain. DNA-binding is increased by heterodimerization. Interacts with TLE1 and ALYREF/THOC4. Interacts with ELF1, ELF2 and SPI1. Interacts via its Runt domain with the ELF4 N-terminal region. Interaction with ELF2 isoform 2 (NERF-1a) may act to repress RUNX1-mediated transactivation. Interacts with KAT6A and KAT6B. Interacts with SUV39H1, leading to abrogation of transactivating and DNA-binding properties of RUNX1. Interacts with YAP1 and HIPK2. Interaction with CDK6 prevents myeloid differentiation, reducing its transcription transactivation activity. Found in a complex with PRMT5, RUNX1 and CBFB. Interacts with FOXP3. Interacts with TBX21. Interacts with DPF2. In terms of processing, phosphorylated in its C-terminus upon IL-6 treatment. Phosphorylation enhances interaction with KAT6A. Methylated. Post-translationally, phosphorylated in Ser-249 Thr-272 and Ser-275 by HIPK2 when associated with CBFB and DNA. This phosphorylation promotes subsequent EP300 phosphorylation. In terms of tissue distribution, expressed in skeletal muscle.

The protein localises to the nucleus. Its function is as follows. CBF binds to the core site, 5'-PYGPYGGT-3', of a number of enhancers and promoters, including murine leukemia virus, polyomavirus enhancer, T-cell receptor enhancers, LCK, IL-3 and GM-CSF promoters. The alpha subunit binds DNA and appears to have a role in the development of normal hematopoiesis. Isoform AML-1L interferes with the transactivation activity of RUNX1. Acts synergistically with ELF4 to transactivate the IL-3 promoter and with ELF2 to transactivate the BLK promoter. Inhibits KAT6B-dependent transcriptional activation. Controls the anergy and suppressive function of regulatory T-cells (Treg) by associating with FOXP3. Activates the expression of IL2 and IFNG and down-regulates the expression of TNFRSF18, IL2RA and CTLA4, in conventional T-cells. Positively regulates the expression of RORC in T-helper 17 cells. In Rattus norvegicus (Rat), this protein is Runt-related transcription factor 1 (Runx1).